Here is a 279-residue protein sequence, read N- to C-terminus: Protease HtpX homolog (279 aa).

The next 2 membrane-spanning stretches (helical) occupy residues 4 to 24 (IFLF…VLAV) and 34 to 54 (GSLL…SLLM). Residue histidine 140 participates in Zn(2+) binding. The active site involves glutamate 141. Histidine 144 contacts Zn(2+). The next 2 helical transmembrane spans lie at 155-175 (LIQG…ANLI) and 189-209 (FLVS…IVMW). Glutamate 215 lines the Zn(2+) pocket.

It belongs to the peptidase M48B family. Zn(2+) serves as cofactor.

The protein localises to the cell inner membrane. This chain is Protease HtpX homolog, found in Neisseria meningitidis serogroup B (strain ATCC BAA-335 / MC58).